The sequence spans 352 residues: Ion-translocating oxidoreductase complex subunit D (352 aa).

4 helical membrane-spanning segments follow: residues 20–40, 42–62, 69–91, and 123–143; these read IMLL…WFFG, GTLF…AIVL, VASH…SIPP, and PAMI…TSWL. At Thr-187 the chain carries FMN phosphoryl threonine. 5 helical membrane-spanning segments follow: residues 215-235, 242-262, 267-287, 301-321, and 322-342; these read LAGV…VFLL, WHIP…GWLF, LASP…FFIL, LIFG…GGYP, and DGVA…DYYT.

It belongs to the NqrB/RnfD family. In terms of assembly, the complex is composed of six subunits: RsxA, RsxB, RsxC, RsxD, RsxE and RsxG. Requires FMN as cofactor.

Its subcellular location is the cell inner membrane. Its function is as follows. Part of a membrane-bound complex that couples electron transfer with translocation of ions across the membrane. Required to maintain the reduced state of SoxR. The protein is Ion-translocating oxidoreductase complex subunit D of Salmonella choleraesuis (strain SC-B67).